The chain runs to 158 residues: uncharacterized protein (158 aa).

Belongs to the SixA phosphatase family.

This is an uncharacterized protein from Mycobacterium tuberculosis (strain CDC 1551 / Oshkosh).